We begin with the raw amino-acid sequence, 729 residues long: Circadian input-output histidine kinase CikA (729 aa).

Residues 1–169 are N-terminal domain; sequence MPQPIFDRIL…QVTTQIRQSL (169 aa). Positions 170–314 are GAF domain; sequence ELPELLKIAV…VEFLTHLSQH (145 aa). The Histidine kinase domain maps to 366–587; that stretch reads TMSHELRTPL…TFTVGLPAIS (222 aa). Histidine 369 bears the Phosphohistidine; by autocatalysis mark. Positions 613–729 are psR domain, binds KaiB; sequence EGRIVLVSED…GLTSLATSAQ (117 aa).

It in the N-terminal section; belongs to the phytochrome family. Homodimer. Part of the circadian clock (KaiA, KaiB, KaiC, CikA, RpaA, SasA), the composition of which varies during the circadian cycle. KaiA and CikA compete for binding to KaiB(fs). The PsR domain binds the KaiB:KaiC CI complex but poorly to either protein alone. KaiA and CikA bind to the same region of the KaiB(fs) form and therefore compete.

The enzyme catalyses ATP + protein L-histidine = ADP + protein N-phospho-L-histidine.. Its function is as follows. Functions in an input pathway to the Kai circadian clock. Senses oxidized quinones via its C-terminal pseudo-receiver domain, providing a link between cell metabolism and the clock. Affects the ratio of phosphorylated to unphosphorylated KaiC, binds quinones via its pseudo-receptor domain. Quinone-binding destabilizes the protein rapidly. Autophosphorylates, does not transfer the phosphate to its pseudo-receiver (PsR) domain. May play a role in cell division. Functionally, also functions in a two-component CikA/RpaA output pathway from the circadian clock, negatively regulating kaiBC expression independently of labA and of sasA. One of three clock output pathways. Dephosphorylates phospho-RpaA, enhanced by KaiB and KaiC, has only modest kinase activity on RpaA. The polypeptide is Circadian input-output histidine kinase CikA (Thermosynechococcus vestitus (strain NIES-2133 / IAM M-273 / BP-1)).